Reading from the N-terminus, the 327-residue chain is Mitochondrial carnitine carrier (327 aa).

A compositionally biased stretch (low complexity) spans 1-11; that stretch reads MSSDTSLSESS. The tract at residues 1-29 is disordered; it reads MSSDTSLSESSLLKEESGSLTKSRPPIKS. 6 consecutive transmembrane segments (helical) span residues 33 to 49, 107 to 123, 141 to 162, 196 to 212, 244 to 260, and 293 to 313; these read RENIKSFVAGGVGGVCA, LGVTPIFAVSFWGYDVG, MGQMAAAGFISAIPTTLVTAPT, GSLATLARDGPGSALYF, LAGGIAGMSMWLAVFPI, and FFPGLGPALLRSFPANAATFL. 3 Solcar repeats span residues 33 to 126, 139 to 221, and 237 to 321; these read RENI…GKKL, LTMG…SKNY, and VNIL…THSL.

Belongs to the mitochondrial carrier (TC 2.A.29) family.

It localises to the mitochondrion inner membrane. Its function is as follows. Transports carnitine, acetylcarnitine, propionylcarnitine and to a much lower extent medium- and long-chain acylcarnitines. In Saccharomyces cerevisiae (strain ATCC 204508 / S288c) (Baker's yeast), this protein is Mitochondrial carnitine carrier (CRC1).